The chain runs to 262 residues: Acyl-[acyl-carrier-protein]--UDP-N-acetylglucosamine O-acyltransferase (262 aa).

Belongs to the transferase hexapeptide repeat family. LpxA subfamily. As to quaternary structure, homotrimer.

The protein localises to the cytoplasm. It carries out the reaction a (3R)-hydroxyacyl-[ACP] + UDP-N-acetyl-alpha-D-glucosamine = a UDP-3-O-[(3R)-3-hydroxyacyl]-N-acetyl-alpha-D-glucosamine + holo-[ACP]. Its pathway is glycolipid biosynthesis; lipid IV(A) biosynthesis; lipid IV(A) from (3R)-3-hydroxytetradecanoyl-[acyl-carrier-protein] and UDP-N-acetyl-alpha-D-glucosamine: step 1/6. Functionally, involved in the biosynthesis of lipid A, a phosphorylated glycolipid that anchors the lipopolysaccharide to the outer membrane of the cell. This is Acyl-[acyl-carrier-protein]--UDP-N-acetylglucosamine O-acyltransferase from Burkholderia lata (strain ATCC 17760 / DSM 23089 / LMG 22485 / NCIMB 9086 / R18194 / 383).